The sequence spans 131 residues: Large ribosomal subunit protein bL17 (131 aa).

The protein belongs to the bacterial ribosomal protein bL17 family. In terms of assembly, part of the 50S ribosomal subunit. Contacts protein L32.

The sequence is that of Large ribosomal subunit protein bL17 from Bordetella avium (strain 197N).